The chain runs to 277 residues: MSETPTACLIGWPAAHSRSPIIHKYWLKELGIAGDYRIEAVEPAAFPDFIASLAARGYCGANVTIPHKEKALALSLPDARARAVGAANTLYFRDDKLHSTNTDVEGFIGNLDASAQRWRADDDAVVLGAGGSARAVVFGLIERGVPRIHLVNRSRERAQALAQPYGERVSVASWDDVESLLPKAGLVVNTTSLGMKGQPPLPLDVALLRADATVADLVYVPLRTELLTAAAGRGLQTADGLGMLLHQAVRGFELWFGRRPQVSPALRALVEADLTVK.

Residues S17–S19 and T64 contribute to the shikimate site. K68 serves as the catalytic Proton acceptor. Residues N88 and D103 each contribute to the shikimate site. NADP(+) is bound by residues G128 to S132 and L217. Residue Y219 participates in shikimate binding. An NADP(+)-binding site is contributed by G240.

The protein belongs to the shikimate dehydrogenase family. In terms of assembly, homodimer.

It carries out the reaction shikimate + NADP(+) = 3-dehydroshikimate + NADPH + H(+). It participates in metabolic intermediate biosynthesis; chorismate biosynthesis; chorismate from D-erythrose 4-phosphate and phosphoenolpyruvate: step 4/7. Functionally, involved in the biosynthesis of the chorismate, which leads to the biosynthesis of aromatic amino acids. Catalyzes the reversible NADPH linked reduction of 3-dehydroshikimate (DHSA) to yield shikimate (SA). In Afipia carboxidovorans (strain ATCC 49405 / DSM 1227 / KCTC 32145 / OM5) (Oligotropha carboxidovorans), this protein is Shikimate dehydrogenase (NADP(+)).